The chain runs to 339 residues: ATPase GET3 (339 aa).

An ATP-binding site is contributed by 34–41; that stretch reads KGGVGKTT. Residue Asp63 is part of the active site. Positions 243 and 270 each coordinate ATP. Cys281 and Cys284 together coordinate Zn(2+).

The protein belongs to the arsA ATPase family. As to quaternary structure, homodimer.

It localises to the cytoplasm. The protein localises to the endoplasmic reticulum. ATPase required for the post-translational delivery of tail-anchored (TA) proteins to the endoplasmic reticulum. Recognizes and selectively binds the transmembrane domain of TA proteins in the cytosol. This complex then targets to the endoplasmic reticulum by membrane-bound receptors, where the tail-anchored protein is released for insertion. This process is regulated by ATP binding and hydrolysis. ATP binding drives the homodimer towards the closed dimer state, facilitating recognition of newly synthesized TA membrane proteins. ATP hydrolysis is required for insertion. Subsequently, the homodimer reverts towards the open dimer state, lowering its affinity for the membrane-bound receptor, and returning it to the cytosol to initiate a new round of targeting. In Coccidioides immitis (strain RS) (Valley fever fungus), this protein is ATPase GET3.